The chain runs to 541 residues: Apolipoprotein N-acyltransferase (541 aa).

6 helical membrane passes run 21-41 (MSWFFSLLGSAVGYGLLWYSL), 54-74 (LTSLLFLWSVTVYGVHFSWML), 89-109 (VLISLLALLFTAFSCLLFFIV), 116-136 (ILWCLPGLWVAVEMVRFYFLC), 157-177 (FGGFFGWAGESFILVATGISF), and 189-209 (YVWLGCLLFPYILGGVHYEYL). The CN hydrolase domain maps to 219-500 (LRVAVIQPAS…PGVLQVSLPM (282 aa)). Residue Glu265 is the Proton acceptor of the active site. The active site involves Lys350. The active-site Nucleophile is the Cys405. Residues 506–526 (LYAFWGDFPMIFLSLLSIGCI) form a helical membrane-spanning segment.

This sequence belongs to the CN hydrolase family. Apolipoprotein N-acyltransferase subfamily.

The protein resides in the cell inner membrane. It carries out the reaction N-terminal S-1,2-diacyl-sn-glyceryl-L-cysteinyl-[lipoprotein] + a glycerophospholipid = N-acyl-S-1,2-diacyl-sn-glyceryl-L-cysteinyl-[lipoprotein] + a 2-acyl-sn-glycero-3-phospholipid + H(+). Its pathway is protein modification; lipoprotein biosynthesis (N-acyl transfer). In terms of biological role, catalyzes the phospholipid dependent N-acylation of the N-terminal cysteine of apolipoprotein, the last step in lipoprotein maturation. The polypeptide is Apolipoprotein N-acyltransferase (Chlamydia caviae (strain ATCC VR-813 / DSM 19441 / 03DC25 / GPIC) (Chlamydophila caviae)).